The primary structure comprises 329 residues: Vanillate O-demethylase oxygenase subunit (329 aa).

The 84-residue stretch at 1 to 84 folds into the Rieske domain; it reads MICNERMVIY…AQERHGFIWV (84 aa). [2Fe-2S] cluster-binding residues include Cys24, His26, Cys43, and His46.

The protein belongs to the bacterial ring-hydroxylating dioxygenase alpha subunit family. In terms of assembly, this demethylase system consists of two proteins: an oxygenase and an oxygenase reductase. [2Fe-2S] cluster is required as a cofactor. The cofactor is Fe cation.

It carries out the reaction vanillate + NADH + O2 + H(+) = 3,4-dihydroxybenzoate + formaldehyde + NAD(+) + H2O. Its pathway is xenobiotic degradation; vanillyl-alcohol degradation. In Pseudomonas sp. (strain ATCC 19151), this protein is Vanillate O-demethylase oxygenase subunit (vanA).